Reading from the N-terminus, the 1319-residue chain is ERAD-associated E3 ubiquitin-protein ligase DOA10 (1319 aa).

Met-1 carries the post-translational modification N-acetylmethionine. Residues 1-131 (MDVDSDVNVS…LTFFEKARLA (131 aa)) are Cytoplasmic-facing. The RING-CH-type zinc-finger motif lies at 31 to 100 (DDAPSGATCR…DICHYPIQFK (70 aa)). The Zn(2+) site is built by Cys-39, Cys-42, Cys-56, Cys-58, His-66, Cys-69, Cys-90, and Cys-93. Residues 132–152 (LTIGLAAVLYIIGVPLVWNMF) traverse the membrane as a helical segment. The Lumenal portion of the chain corresponds to 153–203 (GKLYTMMLDGSSPYPGDFLKSLIYGYDQSATPELTTRAIFYQLLQNHSFTS). A helical membrane pass occupies residues 204 to 224 (LQFIMIVILHIALYFQYDMIV). At 225–468 (REDVFSKMVF…GPLVINLKLK (244 aa)) the chain is on the cytoplasmic side. Residues 291-306 (ADNNNNVINPRNDNVP) show a composition bias toward low complexity. 2 disordered regions span residues 291 to 315 (ADNN…DHRN) and 329 to 381 (EATE…EADY). Residues 469–489 (LLNVIAYFIIAVVFTAIYLAI) traverse the membrane as a helical segment. The Lumenal segment spans residues 490–491 (SY). The chain crosses the membrane as a helical span at residues 492-512 (LFPTFIGFGLLKIYFGIFKVI). At 513–626 (LRGLCHLYYL…LFALKCTFKV (114 aa)) the chain is on the cytoplasmic side. A helical transmembrane segment spans residues 627-647 (FTLFFIELAGFPILAGVMLDF). Topologically, residues 648–660 (SLFCPILASNSRM) are lumenal. A helical transmembrane segment spans residues 661-681 (LWVPSICAIWPPFSLFVYWTI). The Cytoplasmic segment spans residues 682–739 (GTLYMYWFAKYIGMIRKNIIRPGVLFFIRSPEDPNIKILHDSLIHPMSIQLSRLCLSM). A helical membrane pass occupies residues 740-760 (FIYAIFIVLGFGFHTRIFFPF). The Lumenal segment spans residues 761–777 (MLKSNLLSVPEAYKPTS). The helical transmembrane segment at 778 to 797 (IISWKFNTILLTLYFTKRIL) threads the bilayer. Residues 798–965 (ESSSYVKPLL…YVPPDFRLRY (168 aa)) lie on the Cytoplasmic side of the membrane. A helical transmembrane segment spans residues 966 to 986 (MTLLGLVWLFASILMLGVTFI). Over 987–1019 (SQALINFVCSFGFLPVVKLLLGERNKVYVAWKE) the chain is Lumenal. The chain crosses the membrane as a helical span at residues 1020–1040 (LSDISYSYLNIYYVCVGSVCL). Topologically, residues 1041–1113 (SKIAKDILHF…IFDSMLVKYN (73 aa)) are cytoplasmic. The helical transmembrane segment at 1114-1134 (LMVFIAIMIAVIRTMVSWVVL) threads the bilayer. Residues 1135–1168 (TDGILACYNYLTIRVFGNSSYTIGNSKWFKYDES) lie on the Lumenal side of the membrane. Residues 1169 to 1189 (LLFVVWIISSMVNFGTGYKSL) form a helical membrane-spanning segment. At 1190-1213 (KLFFRNRNTSKLNFLKTMALELFK) the chain is on the cytoplasmic side. The chain crosses the membrane as a helical span at residues 1214-1234 (QGFLHMVIYVLPIIILSLVFL). The Lumenal segment spans residues 1235–1270 (RDVSTKQIIDISHGSRSFTLSLNESFPTWTRMQDIY). The helical transmembrane segment at 1271–1291 (FGLLIALESFTFFFQATVLFI) threads the bilayer. The Cytoplasmic portion of the chain corresponds to 1292 to 1319 (QWFKSTVQNVKDEVYTKGRALENLPDES).

Belongs to the DOA10/MARCH6 family. In terms of assembly, component of the DOA10 ubiquitin ligase complex which contains E3 ligase SSM4/DOA10 and CDC48-binding protein UBX2/SEL1. The DOA10 complex interacts with the heterotrimeric CDC48-NPL4-UFD1 ATPase complex which is recruited by UBX2/SEL1 via its interaction with CDC48. Interacts with its associated ubiquitin conjugating enzymes UBC6 and UBC7 with its membrane anchor CUE1. Interacts with PEX29.

The protein localises to the endoplasmic reticulum membrane. It localises to the nucleus inner membrane. It carries out the reaction S-ubiquitinyl-[E2 ubiquitin-conjugating enzyme]-L-cysteine + [acceptor protein]-L-lysine = [E2 ubiquitin-conjugating enzyme]-L-cysteine + N(6)-ubiquitinyl-[acceptor protein]-L-lysine.. Its pathway is protein modification; protein ubiquitination. Its function is as follows. E3 ubiquitin-protein ligase which accepts ubiquitin specifically from endoplasmic reticulum-associated UBC6 and UBC7 E2 ligases, and transfers it to substrates promoting their degradation. Mediates the degradation of a broad range of substrates, including endoplasmic reticulum membrane proteins (ERQC), soluble nuclear proteins and soluble cytoplasmic proteins (CytoQC). Component of the DOA10 ubiquitin ligase complex, which is part of the ERAD-C pathway responsible for the rapid degradation of membrane proteins with misfolded cytoplasmic domains. ERAD-C substrates are ubiquitinated through DOA10 in conjunction with the E2 ubiquitin-conjugating enzymes UBC6 and UBC7-CUE1. Ubiquitinated substrates are then removed to the cytosol via the action of the UFD1-NPL4-CDC48/p97 (UNC) AAA ATPase complex and targeted to the proteasome. Also recognizes the N-terminally acetylated residue of proteins as degradation signal (degron). N-terminally acetylated target proteins include MATALPHA2, TBF1, SLK19, YMR090W, HIS3, HSP104, UBP6 and ARO8. Catalyzes ubiquitination of mislocalized tail-anchored proteins that are extracted from the mitochondrion membrane by MSP1: following extraction, mistargeted proteins are transferred to the endoplasmic reticulum, where they are ubiquitinated by DOA10 and degraded by the proteasome. This is ERAD-associated E3 ubiquitin-protein ligase DOA10 (SSM4) from Saccharomyces cerevisiae (strain ATCC 204508 / S288c) (Baker's yeast).